A 365-amino-acid polypeptide reads, in one-letter code: Chorismate synthase (365 aa).

NADP(+) contacts are provided by Arg-48 and Arg-54. Residues 125–127, 237–238, Gly-277, 292–296, and Arg-318 contribute to the FMN site; these read RAS, NA, and KPTSS.

The protein belongs to the chorismate synthase family. Homotetramer. Requires FMNH2 as cofactor.

It catalyses the reaction 5-O-(1-carboxyvinyl)-3-phosphoshikimate = chorismate + phosphate. The protein operates within metabolic intermediate biosynthesis; chorismate biosynthesis; chorismate from D-erythrose 4-phosphate and phosphoenolpyruvate: step 7/7. Catalyzes the anti-1,4-elimination of the C-3 phosphate and the C-6 proR hydrogen from 5-enolpyruvylshikimate-3-phosphate (EPSP) to yield chorismate, which is the branch point compound that serves as the starting substrate for the three terminal pathways of aromatic amino acid biosynthesis. This reaction introduces a second double bond into the aromatic ring system. This chain is Chorismate synthase, found in Polaromonas sp. (strain JS666 / ATCC BAA-500).